The primary structure comprises 347 residues: Protein NDL3 (347 aa).

The protein belongs to the NDRG family. Interacts with the heterodimers formed by GB1 and GG1, or GB1 and GG2. Interacts with RGS1.

It localises to the cytoplasm. Functionally, involved in a signaling pathway that modulates root auxin transport and auxin gradients. Acts partially by positively regulating the auxin carrier PIN2 and AUX1. Acts, together with GB1 as positive regulator of meristem initiation and branching. GB1 and NDL3 positively regulate basipetal inflorescence auxin transport and modulate MAX2 expression in shoots, which regulates organ and lateral meristem formation by the establishment and maintenance of auxin gradients. In Arabidopsis thaliana (Mouse-ear cress), this protein is Protein NDL3.